The following is a 416-amino-acid chain: Adenylosuccinate synthetase (416 aa).

GTP-binding positions include 13–19 (GDEGKGK) and 41–43 (GHT). D14 serves as the catalytic Proton acceptor. D14 and G41 together coordinate Mg(2+). IMP contacts are provided by residues 14 to 17 (DEGK), 39 to 42 (NAGH), T126, R140, Q220, T235, and R299. The active-site Proton donor is H42. A substrate-binding site is contributed by 295-301 (TTTGRPR). GTP is bound by residues R301, 327 to 329 (KLD), and 405 to 407 (STS).

This sequence belongs to the adenylosuccinate synthetase family. Homodimer. The cofactor is Mg(2+).

It localises to the cytoplasm. It catalyses the reaction IMP + L-aspartate + GTP = N(6)-(1,2-dicarboxyethyl)-AMP + GDP + phosphate + 2 H(+). It participates in purine metabolism; AMP biosynthesis via de novo pathway; AMP from IMP: step 1/2. Its function is as follows. Plays an important role in the de novo pathway of purine nucleotide biosynthesis. Catalyzes the first committed step in the biosynthesis of AMP from IMP. The protein is Adenylosuccinate synthetase of Sulfurovum sp. (strain NBC37-1).